A 493-amino-acid polypeptide reads, in one-letter code: Cytochrome P450 monooxygenase astA (493 aa).

Residues 5–25 (EIILLGLAALAVTYQVIVWIY) traverse the membrane as a helical segment. N-linked (GlcNAc...) asparagine glycosylation is found at Asn-174 and Asn-286. Cys-433 is a binding site for heme.

This sequence belongs to the cytochrome P450 family. Heme serves as cofactor.

It localises to the membrane. It carries out the reaction asperterpenoid A + reduced [NADPH--hemoprotein reductase] + O2 = asperterpenoid C + oxidized [NADPH--hemoprotein reductase] + H2O + H(+). Its pathway is secondary metabolite biosynthesis; terpenoid biosynthesis. Cytochrome P450 monooxygenase; part of the gene cluster that mediates the biosynthesis of the asperterpenoids, sesterterpenes that exhibit anti-tuberculosis activity. The first step of the pathway is performed by the sesterterpene synthase astC that possesses both prenyl transferase and terpene cyclase activity, converting isopentenyl diphosphate and dimethylallyl diphosphate into geranylfarnesyl diphosphate (GFPP) and further converting GFPP into preasperterpenoid A, respectively. The cytochrome P450 monooxygenase astB then dually oxidizes preasperterpenoid A to produce asperterpenoid A along with a minor product, asperterpenoid B. Finally, the cytochrome P450 monooxygenase astA converts asperterpenoid A into asperterpenoid C. In Talaromyces wortmannii (Penicillium wortmannii), this protein is Cytochrome P450 monooxygenase astA.